The chain runs to 2824 residues: Highly reducing polyketide synthase stpks1 (2824 aa).

In terms of domain architecture, Ketosynthase family 3 (KS3) spans 8–428 (PKPVAVVGIS…GANGHVIAES (421 aa)). Active-site for beta-ketoacyl synthase activity residues include Cys177, His312, and His348. Residues 517 to 854 (QLVFVFSGQG…LTAVGNLSTL (338 aa)) form a malonyl-CoA:ACP transacylase (MAT) domain region. Ser616 (for malonyltransferase activity) is an active-site residue. The segment at 886 to 1004 (MPFYSESSEL…GFMTTEVMDK (119 aa)) is N-terminal hotdog fold. In terms of domain architecture, PKS/mFAS DH spans 886–1168 (MPFYSESSEL…SKHWTGAVPT (283 aa)). Positions 894–1083 (ELAVKMKRSR…PSLLDSCIHG (190 aa)) are dehydratase (DH) domain. The active-site Proton acceptor; for dehydratase activity is the His925. The tract at residues 1018–1168 (TTPADISNLY…SKHWTGAVPT (151 aa)) is C-terminal hotdog fold. Catalysis depends on Asp1078, which acts as the Proton donor; for dehydratase activity. Residues 1101 to 1449 (PSHIGRVTLY…KFQVVDGAQD (349 aa)) are methyltransferase (CMet) domain. The interval 1213–1232 (APPSANGHANGHANGSANGS) is disordered. Residues 1518 to 1840 (TGTFDGAVAT…LPSDFSVSQS (323 aa)) are enoyl reductase (ER) domain. The tract at residues 1842 to 2096 (ALADDKTYLV…SESVLYNHLV (255 aa)) is ketoreductase (KR) domain. The Carrier domain maps to 2109 to 2196 (DPYEVLQEIV…TAVSTAEKPF (88 aa)). Positions 2200 to 2414 (AMHQPGQTIL…WASSDATTRM (215 aa)) are thioesterase (TE) domain. The methyltransferase (CMet) domain stretch occupies residues 2608–2809 (YRQNKVFTSM…ATGYSNVQVC (202 aa)).

It participates in mycotoxin biosynthesis. Its function is as follows. Highly reducing polyketide synthase; part of the gene cluster that mediates the biosynthesis of strobilurin A, an antifungal polyketide that contains a key beta-methoxyacrylate toxophore that targets the complex III of the mitochondrial electron transport chain. Strobilurin biosynthesis begins with construction of benzoyl CoA by step-wise elimination of ammonia from phenylalanine by the phenylalanine ammonia-lyase str11, oxygenation by str8 and retro-Claisen reaction to form benzoic acid, which is activated to its CoA thiolester benzoyl CoA by the dedicated CoA ligase str10. Benzoyl CoA forms the starter unit for the highly reducing polyketide synthase stpks1 that produces the polyketide prestrobilutin A. The FAD-dependent oxygenase str9 then catalyzes the key oxidative rearrangement responsible for the creation of the beta-methoxyacrylate toxophore. Str9 performs epoxidation of the 2,3 olefin of prestrobilutin A, followed by Meinwald rearrangement to furnish the aldehyde intermediate. Rapid enolization of the aldehyde intermediate would give the beta-methoxyacrylate skeleton and methylations catalyzed by str2 and str3 complete the synthesis and lead to the production of strobilurin A. The short-chain dehydrogenase stl2 and the dehydrogenase str4 play a role in the shunt pathway leading to the production of bolineol. The cluster encodes no obvious halogenase gene that could be involved in production of strobilurin B, nor any obvious dimethylallyl-transferase that could be involved in the production of strobilurin G. It is possible that unknown proteins encoded in, or near, the cluster (such as str1 or stl1) may form new classes of halogenases or dimethylally-transferases, or that the responsible genes are located elsewhere on the genome. Similarly, proteins encoded by str5/str6 hydrolases appear to have no chemical role in the biosynthesis of strobilurin A. Finally, no obvious self-resistance gene is found within the cluster. This Strobilurus tenacellus protein is Highly reducing polyketide synthase stpks1.